The chain runs to 341 residues: Ketol-acid reductoisomerase (NADP(+)) (341 aa).

Residues 2-182 (AKIYYNDDAD…GGTRAGVIET (181 aa)) enclose the KARI N-terminal Rossmann domain. Residues 25–28 (YGSQ), S51, S53, and 83–86 (DQVQ) each bind NADP(+). H108 is an active-site residue. G134 lines the NADP(+) pocket. Residues 183-328 (TFTEETESDL…RKLRSLFAWE (146 aa)) enclose the KARI C-terminal knotted domain. Residues D191, E195, E227, and E231 each contribute to the Mg(2+) site. S252 provides a ligand contact to substrate.

The protein belongs to the ketol-acid reductoisomerase family. Mg(2+) serves as cofactor.

It carries out the reaction (2R)-2,3-dihydroxy-3-methylbutanoate + NADP(+) = (2S)-2-acetolactate + NADPH + H(+). The enzyme catalyses (2R,3R)-2,3-dihydroxy-3-methylpentanoate + NADP(+) = (S)-2-ethyl-2-hydroxy-3-oxobutanoate + NADPH + H(+). Its pathway is amino-acid biosynthesis; L-isoleucine biosynthesis; L-isoleucine from 2-oxobutanoate: step 2/4. The protein operates within amino-acid biosynthesis; L-valine biosynthesis; L-valine from pyruvate: step 2/4. Its function is as follows. Involved in the biosynthesis of branched-chain amino acids (BCAA). Catalyzes an alkyl-migration followed by a ketol-acid reduction of (S)-2-acetolactate (S2AL) to yield (R)-2,3-dihydroxy-isovalerate. In the isomerase reaction, S2AL is rearranged via a Mg-dependent methyl migration to produce 3-hydroxy-3-methyl-2-ketobutyrate (HMKB). In the reductase reaction, this 2-ketoacid undergoes a metal-dependent reduction by NADPH to yield (R)-2,3-dihydroxy-isovalerate. The polypeptide is Ketol-acid reductoisomerase (NADP(+)) (Kocuria rhizophila (strain ATCC 9341 / DSM 348 / NBRC 103217 / DC2201)).